A 144-amino-acid chain; its full sequence is Large ribosomal subunit protein uL16 (144 aa).

Belongs to the universal ribosomal protein uL16 family. As to quaternary structure, part of the 50S ribosomal subunit.

Binds 23S rRNA and is also seen to make contacts with the A and possibly P site tRNAs. The sequence is that of Large ribosomal subunit protein uL16 from Listeria innocua serovar 6a (strain ATCC BAA-680 / CLIP 11262).